A 524-amino-acid chain; its full sequence is Excitatory amino acid transporter 3 (524 aa).

The Cytoplasmic portion of the chain corresponds to 1 to 18 (MGKPARKGCEWKRFLKNN). A helical transmembrane segment spans residues 19-38 (WVLLSTVAAVVLGITTGVLV). At 39 to 61 (REHSNLSTLEKFYFAFPGEILMR) the chain is on the extracellular side. Residue Asn43 is glycosylated (N-linked (GlcNAc...) asparagine). Residues 62–82 (MLKLIILPLIISSMITGVAAL) form a helical membrane-spanning segment. Residues 83-93 (DSNVSGKIGLR) are Cytoplasmic-facing. Residues 94–114 (AVVYYFCTTLIAVILGIVLVV) traverse the membrane as a helical segment. Residues Tyr98, Thr101, and Thr102 each coordinate Na(+). The Extracellular portion of the chain corresponds to 115-205 (SIKPGVTQKV…KTKEYKIVGM (91 aa)). Asn178 and Asn195 each carry an N-linked (GlcNAc...) asparagine glycan. A helical membrane pass occupies residues 206-229 (YSDGINVLGLIVFCLVFGLVIGKM). Over 230–238 (GEKGQILVD) the chain is Cytoplasmic. A helical membrane pass occupies residues 239-266 (FFNALSDATMKIVQIIMCYMPLGILFLI). Over 267-286 (AGKIIEVEDWEIFRKLGLYM) the chain is Extracellular. A helical membrane pass occupies residues 287–308 (ATVLTGLAIHSIVILPLIYFIV). Residues 309 to 313 (VRKNP) lie on the Cytoplasmic side of the membrane. The discontinuously helical intramembrane region spans 314-344 (FRFAMGMAQALLTALMISSSSATLPVTFRCA). L-aspartate contacts are provided by Ser331 and Ser333. The Cytoplasmic portion of the chain corresponds to 345–353 (EENNQVDKR). Residues 354-380 (ITRFVLPVGATINMDGTALYEAVAAVF) traverse the membrane as a helical segment. Gly362, Thr364, Asn366, and Asp368 together coordinate Na(+). An L-aspartate-binding site is contributed by Thr370. Over 381 to 393 (IAQLNDLDLGIGQ) the chain is Extracellular. The segment at residues 394-427 (IITISITATSASIGAAGVPQAGLVTMVIVLSAVG) is an intramembrane region (discontinuously helical). Positions 405, 406, and 408 each coordinate Na(+). Val411 is a binding site for L-aspartate. Residues 428-440 (LPAEDVTLIIAVD) lie on the Extracellular side of the membrane. Residues 441–462 (WLLDRFRTMVNVLGDAFGTGIV) form a helical membrane-spanning segment. L-aspartate contacts are provided by Arg447, Thr448, and Asn451. Residues Asn451 and Asp455 each contribute to the Na(+) site. The Cytoplasmic portion of the chain corresponds to 463–524 (EKLSKKELEQ…TISFTQTSQF (62 aa)). Residues Ser517 and Ser522 each carry the phosphoserine modification.

It belongs to the dicarboxylate/amino acid:cation symporter (DAACS) (TC 2.A.23) family. SLC1A1 subfamily. Homotrimer. Interacts with ARL6IP5. Interacts with RTN2 (via N-terminus); the interaction promotes cell surface expression of SLC1A1. Interacts with SORCS2; this interaction is important for normal expression at the cell membrane. In terms of processing, glycosylated. In terms of tissue distribution, expressed in all tissues tested including liver, muscle, testis, ovary, retinoblastoma cell line, neurons and brain (in which there was dense expression in substantia nigra, red nucleus, hippocampus and in cerebral cortical layers).

Its subcellular location is the cell membrane. The protein resides in the apical cell membrane. The protein localises to the synapse. It is found in the synaptosome. It localises to the early endosome membrane. Its subcellular location is the late endosome membrane. The protein resides in the recycling endosome membrane. The catalysed reaction is K(+)(in) + L-glutamate(out) + 3 Na(+)(out) + H(+)(out) = K(+)(out) + L-glutamate(in) + 3 Na(+)(in) + H(+)(in). The enzyme catalyses K(+)(in) + L-aspartate(out) + 3 Na(+)(out) + H(+)(out) = K(+)(out) + L-aspartate(in) + 3 Na(+)(in) + H(+)(in). It carries out the reaction D-aspartate(out) + K(+)(in) + 3 Na(+)(out) + H(+)(out) = D-aspartate(in) + K(+)(out) + 3 Na(+)(in) + H(+)(in). It catalyses the reaction K(+)(in) + L-cysteine(out) + 3 Na(+)(out) + H(+)(out) = K(+)(out) + L-cysteine(in) + 3 Na(+)(in) + H(+)(in). Functionally, sodium-dependent, high-affinity amino acid transporter that mediates the uptake of L-glutamate and also L-aspartate and D-aspartate. Can also transport L-cysteine. Functions as a symporter that transports one amino acid molecule together with two or three Na(+) ions and one proton, in parallel with the counter-transport of one K(+) ion. Mediates Cl(-) flux that is not coupled to amino acid transport; this avoids the accumulation of negative charges due to aspartate and Na(+) symport. Plays an important role in L-glutamate and L-aspartate reabsorption in renal tubuli. Plays a redundant role in the rapid removal of released glutamate from the synaptic cleft, which is essential for terminating the postsynaptic action of glutamate. Contributes to glutathione biosynthesis and protection against oxidative stress via its role in L-glutamate and L-cysteine transport. Negatively regulated by ARL6IP5. The protein is Excitatory amino acid transporter 3 of Homo sapiens (Human).